Reading from the N-terminus, the 261-residue chain is Metallo-beta-lactamase fold-containing protein ST1585 (261 aa).

The Zn(2+) site is built by His-58, His-60, Asp-62, His-63, His-148, Asp-165, and His-207.

It belongs to the metallo-beta-lactamase superfamily. Monomer.

This Sulfurisphaera tokodaii (strain DSM 16993 / JCM 10545 / NBRC 100140 / 7) (Sulfolobus tokodaii) protein is Metallo-beta-lactamase fold-containing protein ST1585.